The chain runs to 301 residues: Sulfate adenylyltransferase subunit 2 (301 aa).

Belongs to the PAPS reductase family. CysD subfamily. In terms of assembly, heterodimer composed of CysD, the smaller subunit, and CysN.

It carries out the reaction sulfate + ATP + H(+) = adenosine 5'-phosphosulfate + diphosphate. Its pathway is sulfur metabolism; hydrogen sulfide biosynthesis; sulfite from sulfate: step 1/3. Its function is as follows. With CysN forms the ATP sulfurylase (ATPS) that catalyzes the adenylation of sulfate producing adenosine 5'-phosphosulfate (APS) and diphosphate, the first enzymatic step in sulfur assimilation pathway. APS synthesis involves the formation of a high-energy phosphoric-sulfuric acid anhydride bond driven by GTP hydrolysis by CysN coupled to ATP hydrolysis by CysD. The protein is Sulfate adenylyltransferase subunit 2 of Shewanella loihica (strain ATCC BAA-1088 / PV-4).